The primary structure comprises 142 residues: Transcriptional regulator MraZ (142 aa).

SpoVT-AbrB domains are found at residues 5–47 (RFTH…PMDS) and 76–119 (ATVV…SPEN).

The protein belongs to the MraZ family. Forms oligomers.

Its subcellular location is the cytoplasm. It localises to the nucleoid. The polypeptide is Transcriptional regulator MraZ (Thermomicrobium roseum (strain ATCC 27502 / DSM 5159 / P-2)).